A 54-amino-acid polypeptide reads, in one-letter code: Insulin (54 aa).

3 disulfides stabilise this stretch: Cys-7–Cys-39, Cys-19–Cys-52, and Cys-38–Cys-43.

The protein belongs to the insulin family. Heterodimer of a B chain and an A chain linked by two disulfide bonds.

The protein localises to the secreted. In terms of biological role, insulin decreases blood glucose concentration. It increases cell permeability to monosaccharides, amino acids and fatty acids. It accelerates glycolysis, the pentose phosphate cycle, and glycogen synthesis in liver. The sequence is that of Insulin (ins) from Squalus acanthias (Spiny dogfish).